The following is a 335-amino-acid chain: Fimbrial adhesin PapGIII (335 aa).

An N-terminal signal peptide occupies residues 1-21; it reads MKKWLPAFLFLSLSGCNDALA.

This sequence belongs to the adhesin PapG family.

It localises to the secreted. Its subcellular location is the fimbrium. Functionally, tip adhesin component of type P pili that binds preferentially to Gal-alpha(1-4)-Gal-containing glycolipids such as globoside. This tip is common in E.coli strains that cause human cystitis, but rare in pyelonephritic isolates. The sequence is that of Fimbrial adhesin PapGIII from Escherichia coli.